A 316-amino-acid polypeptide reads, in one-letter code: 2,3-dihydroxyphenylpropionate/2,3-dihydroxicinnamic acid 1,2-dioxygenase (316 aa).

H115 (proton donor) is an active-site residue. H180 serves as the catalytic Proton acceptor.

This sequence belongs to the LigB/MhpB extradiol dioxygenase family. Homotetramer. It depends on Fe(2+) as a cofactor.

It catalyses the reaction 3-(2,3-dihydroxyphenyl)propanoate + O2 = (2Z,4E)-2-hydroxy-6-oxonona-2,4-dienedioate + H(+). The catalysed reaction is (2E)-3-(2,3-dihydroxyphenyl)prop-2-enoate + O2 = (2Z,4E,7E)-2-hydroxy-6-oxonona-2,4,7-trienedioate + H(+). Its pathway is aromatic compound metabolism; 3-phenylpropanoate degradation. Functionally, catalyzes the non-heme iron(II)-dependent oxidative cleavage of 2,3-dihydroxyphenylpropionic acid and 2,3-dihydroxicinnamic acid into 2-hydroxy-6-ketononadienedioate and 2-hydroxy-6-ketononatrienedioate, respectively. This chain is 2,3-dihydroxyphenylpropionate/2,3-dihydroxicinnamic acid 1,2-dioxygenase, found in Rhodococcus rhodochrous.